The chain runs to 963 residues: Trehalose synthase (963 aa).

Asp60 serves as a coordination point for substrate. Asn100 contributes to the Ca(2+) binding site. Positions 101 and 165 each coordinate substrate. Asp167 lines the Ca(2+) pocket. Substrate is bound at residue Arg195. The active-site Nucleophile is the Asp197. Ca(2+) contacts are provided by Tyr201, Leu202, and Glu204. Residue Glu240 is the Proton donor of the active site. Substrate is bound by residues His305 and Asp306.

It belongs to the glycosyl hydrolase 13 family. TreS subfamily.

It carries out the reaction D-maltose = alpha,alpha-trehalose. Functionally, catalyzes the reversible interconversion of maltose and alpha,alpha-trehalose by transglucosylation. The polypeptide is Trehalose synthase (treS) (Thermus thermophilus).